A 453-amino-acid chain; its full sequence is Citrate (Re)-synthase (453 aa).

In terms of domain architecture, Pyruvate carboxyltransferase spans 46–316 (IYITDTTFRD…TKNMKLHVIT (271 aa)).

The protein belongs to the alpha-IPM synthase/homocitrate synthase family. It depends on Mn(2+) as a cofactor. The cofactor is Co(2+). Requires Mg(2+) as cofactor.

The enzyme catalyses oxaloacetate + acetyl-CoA + H2O = citrate + CoA + H(+). With respect to regulation, inhibited by p-chloromercuribenzoate (pCMB), EDTA, Zn(2+) ions, and under aerobic conditions. In terms of biological role, catalyzes the condensation of the acetyl group of acetyl-CoA with oxaloacetate to form citrate. This enzyme is highly Re-face stereospecific with respect to the C-2 of oxaloacetate. This is Citrate (Re)-synthase from Clostridium kluyveri (strain ATCC 8527 / DSM 555 / NBRC 12016 / NCIMB 10680 / K1).